The following is a 399-amino-acid chain: (R)-2-hydroxy-4-methylpentanoate CoA-transferase (399 aa).

The active-site Nucleophile is Asp-171.

This sequence belongs to the CoA-transferase III family. As to quaternary structure, homodimer.

It carries out the reaction 4-methylpentanoyl-CoA + (2R)-hydroxy-4-methylpentanoate = (R)-2-hydroxy-4-methylpentanoyl-CoA + 4-methylpentanoate. It participates in amino-acid degradation; L-leucine degradation. Functionally, involved in the reductive branch of L-leucine fermentation. Catalyzes the transfer of the CoA moiety from 4-methylpentanoyl-CoA (isocaproyl-CoA) to (R)-2-hydroxy-4-methylpentanoate ((R)-2-hydroxyisocaproate), leading to the formation of (R)-2-hydroxy-4-methylpentanoyl-CoA. Other CoA thioesters, such as acetyl-CoA or butyryl-CoA, are not accepted as substrates. This Clostridioides difficile (Peptoclostridium difficile) protein is (R)-2-hydroxy-4-methylpentanoate CoA-transferase.